The sequence spans 407 residues: 4-hydroxy-3-methylbut-2-en-1-yl diphosphate synthase (flavodoxin) (407 aa).

Residues Cys296, Cys299, Cys342, and Glu349 each contribute to the [4Fe-4S] cluster site.

Belongs to the IspG family. [4Fe-4S] cluster serves as cofactor.

The enzyme catalyses (2E)-4-hydroxy-3-methylbut-2-enyl diphosphate + oxidized [flavodoxin] + H2O + 2 H(+) = 2-C-methyl-D-erythritol 2,4-cyclic diphosphate + reduced [flavodoxin]. It functions in the pathway isoprenoid biosynthesis; isopentenyl diphosphate biosynthesis via DXP pathway; isopentenyl diphosphate from 1-deoxy-D-xylulose 5-phosphate: step 5/6. Its function is as follows. Converts 2C-methyl-D-erythritol 2,4-cyclodiphosphate (ME-2,4cPP) into 1-hydroxy-2-methyl-2-(E)-butenyl 4-diphosphate. In Methylococcus capsulatus (strain ATCC 33009 / NCIMB 11132 / Bath), this protein is 4-hydroxy-3-methylbut-2-en-1-yl diphosphate synthase (flavodoxin).